Consider the following 328-residue polypeptide: Ferredoxin--NADP reductase (328 aa).

The FAD site is built by serine 14, glutamate 33, glutamine 41, tyrosine 46, isoleucine 90, and phenylalanine 126.

It belongs to the ferredoxin--NADP reductase type 2 family. In terms of assembly, homodimer. It depends on FAD as a cofactor.

It catalyses the reaction 2 reduced [2Fe-2S]-[ferredoxin] + NADP(+) + H(+) = 2 oxidized [2Fe-2S]-[ferredoxin] + NADPH. In Mycoplasmoides gallisepticum (strain R(low / passage 15 / clone 2)) (Mycoplasma gallisepticum), this protein is Ferredoxin--NADP reductase.